A 281-amino-acid chain; its full sequence is MANYTAADIKTLREKSGAGMLDVKKALDEADGDAEKALEIIRVKGLKGVAKREGRSASEGLVAVKVTDAHDVAGQVGTMVELNAETDFVAKNATFVGLAERVLDAAVASAARDADALLAADAGGETVAEIVDGAAATLGEKLVLRRVARLDGEHVGVYLHRTSKDLPPQVGVMVATDAAAASVAEEIAMHVAAYSPAYLTREDVPEQLVADERRIAEETARNEGKPEQALTKIVEGRLNGFFKDQVLVDQAFARDPKKTVGQVVAETGGTLTGFARFRVGA.

Residues 86-89 (TDFV) are involved in Mg(2+) ion dislocation from EF-Tu.

The protein belongs to the EF-Ts family.

The protein resides in the cytoplasm. Associates with the EF-Tu.GDP complex and induces the exchange of GDP to GTP. It remains bound to the aminoacyl-tRNA.EF-Tu.GTP complex up to the GTP hydrolysis stage on the ribosome. The protein is Elongation factor Ts of Beutenbergia cavernae (strain ATCC BAA-8 / DSM 12333 / CCUG 43141 / JCM 11478 / NBRC 16432 / NCIMB 13614 / HKI 0122).